Here is a 78-residue protein sequence, read N- to C-terminus: Large ribosomal subunit protein bL28 (78 aa).

The protein belongs to the bacterial ribosomal protein bL28 family.

The sequence is that of Large ribosomal subunit protein bL28 from Leifsonia xyli subsp. xyli (strain CTCB07).